A 615-amino-acid chain; its full sequence is Putative DNA ligase 205R (615 aa).

The active-site N6-AMP-lysine intermediate is Lys101.

It belongs to the NAD-dependent DNA ligase family.

It carries out the reaction NAD(+) + (deoxyribonucleotide)n-3'-hydroxyl + 5'-phospho-(deoxyribonucleotide)m = (deoxyribonucleotide)n+m + AMP + beta-nicotinamide D-nucleotide.. Catalyzes the formation of phosphodiester linkages between 5'-phosphoryl and 3'-hydroxyl groups in double-stranded DNA using NAD as a coenzyme and as the energy source for the reaction. This chain is Putative DNA ligase 205R, found in Invertebrate iridescent virus 6 (IIV-6).